Reading from the N-terminus, the 250-residue chain is Dimethyl sulfide dehydrogenase assembly chaperone protein (250 aa).

The disordered stretch occupies residues Ser-231–Gly-250.

This sequence belongs to the type II DMSO reductase enzyme chaperone family.

The protein resides in the cytoplasm. Functionally, may function as a system-specific chaperone protein essential for the assembly of an active dimethyl sulfide dehydrogenase DdhABC. In Rhodovulum sulfidophilum (Rhodobacter sulfidophilus), this protein is Dimethyl sulfide dehydrogenase assembly chaperone protein (ddhD).